The chain runs to 451 residues: Trigger factor (451 aa).

One can recognise a PPIase FKBP-type domain in the interval 170–256 (DHIATIDYCE…LTALKYKDLP (87 aa)).

This sequence belongs to the FKBP-type PPIase family. Tig subfamily.

Its subcellular location is the cytoplasm. The enzyme catalyses [protein]-peptidylproline (omega=180) = [protein]-peptidylproline (omega=0). Its function is as follows. Involved in protein export. Acts as a chaperone by maintaining the newly synthesized protein in an open conformation. Functions as a peptidyl-prolyl cis-trans isomerase. The protein is Trigger factor of Treponema denticola (strain ATCC 35405 / DSM 14222 / CIP 103919 / JCM 8153 / KCTC 15104).